The sequence spans 317 residues: Probable RuBisCO transcriptional regulator (317 aa).

Residues 6-63 form the HTH lysR-type domain; the sequence is FTLDQLRILRAILIQGSFKKAATSLYISQPAVSSHVHNIEKQLNIQLFDRSHRNAQLT. Positions 23-42 form a DNA-binding region, H-T-H motif; it reads FKKAATSLYISQPAVSSHVH.

Belongs to the LysR transcriptional regulatory family.

It localises to the plastid. Its subcellular location is the chloroplast. Trans-acting transcriptional regulator of RuBisCO genes (rbcL and rbcS) expression. The protein is Probable RuBisCO transcriptional regulator (rbcR) of Cyanidium caldarium (Red alga).